The chain runs to 366 residues: NADP-dependent oxidoreductase domain-containing protein 1 (366 aa).

It belongs to the pyrroline-5-carboxylate reductase family.

Its function is as follows. Probable oxidoreductase. This chain is NADP-dependent oxidoreductase domain-containing protein 1 (Noxred1), found in Mus musculus (Mouse).